We begin with the raw amino-acid sequence, 360 residues long: DNA replication and repair protein RecF (360 aa).

30–37 serves as a coordination point for ATP; it reads GANGSGKT.

The protein belongs to the RecF family.

It localises to the cytoplasm. Its function is as follows. The RecF protein is involved in DNA metabolism; it is required for DNA replication and normal SOS inducibility. RecF binds preferentially to single-stranded, linear DNA. It also seems to bind ATP. The polypeptide is DNA replication and repair protein RecF (Acinetobacter baumannii (strain SDF)).